Consider the following 160-residue polypeptide: Inner membrane protein YcdZ (160 aa).

5 helical membrane-spanning segments follow: residues 20–42, 50–70, 72–92, 99–119, and 123–143; these read WGAV…YFAC, LLIS…IIHG, ALAP…AFLM, LLLS…AGQG, and LVLP…NSGL.

To E.coli YahC.

It localises to the cell inner membrane. The polypeptide is Inner membrane protein YcdZ (ycdZ) (Salmonella typhimurium (strain LT2 / SGSC1412 / ATCC 700720)).